The chain runs to 341 residues: Protein FAM50A (341 aa).

Disordered regions lie at residues 1-27 (MAQY…EREQ) and 80-147 (LVKE…EIEE). The span at 80-115 (LVKEREKQLAKKEQSKELQLKLEKQKEKKRKEEQKR) shows a compositional bias: basic and acidic residues. Acidic residues predominate over residues 125 to 147 (DEGEDEEEEEEEEEEEEEDEIEE).

It belongs to the FAM50 family.

The protein localises to the nucleus. Its function is as follows. Probably involved in the regulation of pre-mRNA splicing. The chain is Protein FAM50A (fam50a) from Danio rerio (Zebrafish).